Consider the following 300-residue polypeptide: Ornithine carbamoyltransferase (300 aa).

Carbamoyl phosphate contacts are provided by residues 51–54 (STRT), glutamine 78, arginine 102, and 129–132 (HPCQ). Residues asparagine 160, aspartate 217, and 221–222 (SM) each bind L-ornithine. Residues 257 to 258 (CL) and arginine 285 each bind carbamoyl phosphate.

This sequence belongs to the aspartate/ornithine carbamoyltransferase superfamily. OTCase family.

Its subcellular location is the cytoplasm. It catalyses the reaction carbamoyl phosphate + L-ornithine = L-citrulline + phosphate + H(+). It functions in the pathway amino-acid biosynthesis; L-arginine biosynthesis; L-arginine from L-ornithine and carbamoyl phosphate: step 1/3. Functionally, reversibly catalyzes the transfer of the carbamoyl group from carbamoyl phosphate (CP) to the N(epsilon) atom of ornithine (ORN) to produce L-citrulline. The sequence is that of Ornithine carbamoyltransferase from Halorhodospira halophila (strain DSM 244 / SL1) (Ectothiorhodospira halophila (strain DSM 244 / SL1)).